A 93-amino-acid polypeptide reads, in one-letter code: Small ribosomal subunit protein bS20 (93 aa).

The protein belongs to the bacterial ribosomal protein bS20 family.

Functionally, binds directly to 16S ribosomal RNA. In Dictyoglomus turgidum (strain DSM 6724 / Z-1310), this protein is Small ribosomal subunit protein bS20.